The chain runs to 893 residues: DNA mismatch repair protein MutS (893 aa).

A compositionally biased stretch (low complexity) spans 1–17 (MESTMSSASTNASPPSA). A disordered region spans residues 1–22 (MESTMSSASTNASPPSASEKHT). 641–648 (GPNMGGKS) serves as a coordination point for ATP.

The protein belongs to the DNA mismatch repair MutS family.

This protein is involved in the repair of mismatches in DNA. It is possible that it carries out the mismatch recognition step. This protein has a weak ATPase activity. The chain is DNA mismatch repair protein MutS from Herminiimonas arsenicoxydans.